The chain runs to 365 residues: 2-aminoethylphosphonate--pyruvate transaminase (365 aa).

Lys-194 is subject to N6-(pyridoxal phosphate)lysine.

The protein belongs to the class-V pyridoxal-phosphate-dependent aminotransferase family. PhnW subfamily. In terms of assembly, homodimer. It depends on pyridoxal 5'-phosphate as a cofactor.

The catalysed reaction is (2-aminoethyl)phosphonate + pyruvate = phosphonoacetaldehyde + L-alanine. Involved in phosphonate degradation. In Bacillus cereus (strain ATCC 10987 / NRS 248), this protein is 2-aminoethylphosphonate--pyruvate transaminase.